The sequence spans 64 residues: Conotoxin Im11.1 (64 aa).

The first 26 residues, 1–26, serve as a signal peptide directing secretion; that stretch reads MMFRLTSVSCFLLVIACLNLVVLTNA. 4 cysteine pairs are disulfide-bonded: cysteine 27–cysteine 41, cysteine 34–cysteine 46, cysteine 40–cysteine 50, and cysteine 45–cysteine 54. Asparagine 57 carries the asparagine amide modification. The propeptide occupies 61–64; it reads ATFQ.

This sequence belongs to the conotoxin I2 superfamily. Expressed by the venom duct.

The protein localises to the secreted. The protein is Conotoxin Im11.1 of Conus imperialis (Imperial cone).